A 57-amino-acid chain; its full sequence is Phylloseptin-Az4 (57 aa).

Positions 1–13 (LVLFLGLVSLSIC) are cleaved as a signal peptide. Positions 14–35 (EEEKRETEEEENDQEEDDKSEE) are excised as a propeptide. The interval 16–35 (EKRETEEEENDQEEDDKSEE) is disordered. Residues 21–32 (EEEENDQEEDDK) are compositionally biased toward acidic residues. The residue at position 56 (Leu-56) is a Leucine amide.

In terms of tissue distribution, expressed by the skin glands.

Its subcellular location is the secreted. Has antibacterial activity against the Gram-positive bacterium M.luteus ATCC 49732 (MIC=1.3 uM). Does not inhibit the growth of the fungus C.albicans. The polypeptide is Phylloseptin-Az4 (psn12) (Pithecopus azureus (Orange-legged monkey tree frog)).